Reading from the N-terminus, the 608-residue chain is UvrABC system protein C (608 aa).

The 79-residue stretch at 13-91 folds into the GIY-YIG domain; it reads HKPGVYIMHD…IKKNSPKYNI (79 aa). The UVR domain occupies 202 to 237; that stretch reads DELTKKLTDKMMAASKNLNFELAAKLRDSITNIQVI.

The protein belongs to the UvrC family. Interacts with UvrB in an incision complex.

The protein resides in the cytoplasm. In terms of biological role, the UvrABC repair system catalyzes the recognition and processing of DNA lesions. UvrC both incises the 5' and 3' sides of the lesion. The N-terminal half is responsible for the 3' incision and the C-terminal half is responsible for the 5' incision. The sequence is that of UvrABC system protein C from Finegoldia magna (strain ATCC 29328 / DSM 20472 / WAL 2508) (Peptostreptococcus magnus).